We begin with the raw amino-acid sequence, 247 residues long: Probable transcriptional regulatory protein GSU1074 (247 aa).

It belongs to the TACO1 family.

The protein localises to the cytoplasm. This Geobacter sulfurreducens (strain ATCC 51573 / DSM 12127 / PCA) protein is Probable transcriptional regulatory protein GSU1074.